Consider the following 353-residue polypeptide: Protein O-mannose kinase (353 aa).

Over 1–19 (MEKKAHFVKRDFPPREAPS) the chain is Cytoplasmic. A helical; Signal-anchor for type II membrane protein transmembrane segment spans residues 20–40 (LLLLLLVVAVLLLNALLYLYL). At 41–353 (GNLHGSSGRA…AAMPSTREML (313 aa)) the chain is on the lumenal side. The 271-residue stretch at 83 to 353 (VRKLKCVGEG…AAMPSTREML (271 aa)) folds into the Protein kinase domain. 2 N-linked (GlcNAc...) asparagine glycosylation sites follow: Asn-163 and Asn-237.

This sequence belongs to the protein kinase superfamily. Ser/Thr protein kinase family. STKL subfamily.

It localises to the endoplasmic reticulum membrane. It carries out the reaction 3-O-[beta-D-GalNAc-(1-&gt;3)-beta-D-GlcNAc-(1-&gt;4)-alpha-D-Man]-L-Thr-[protein] + ATP = 3-O-[beta-D-GalNAc-(1-&gt;3)-beta-D-GlcNAc-(1-&gt;4)-(O-6-P-alpha-D-Man)]-Thr-[protein] + ADP + H(+). In terms of biological role, protein O-mannose kinase that specifically mediates phosphorylation at the 6-position of an O-mannose of the trisaccharide (N-acetylgalactosamine (GalNAc)-beta-1,3-N-acetylglucosamine (GlcNAc)-beta-1,4-mannose) to generate phosphorylated O-mannosyl trisaccharide (N-acetylgalactosamine-beta-1,3-N-acetylglucosamine-beta-1,4-(phosphate-6-)mannose). Phosphorylated O-mannosyl trisaccharide is a carbohydrate structure present in alpha-dystroglycan (DAG1), which is required for binding laminin G-like domain-containing extracellular proteins with high affinity. Only shows kinase activity when the GalNAc-beta-3-GlcNAc-beta-terminus is linked to the 4-position of O-mannose, suggesting that this disaccharide serves as the substrate recognition motif. This Gallus gallus (Chicken) protein is Protein O-mannose kinase (POMK).